A 461-amino-acid polypeptide reads, in one-letter code: Putative transcription initiation factor IIB-like protein (461 aa).

Residues serine 113–serine 142 are disordered. Residues serine 121–lysine 137 show a composition bias toward low complexity. The segment at lysine 141–aspartate 173 adopts a TFIIB-type zinc-finger fold. The Zn(2+) site is built by cysteine 145, cysteine 165, and cysteine 168. 2 consecutive repeat copies span residues isoleucine 246–valine 327 and isoleucine 360–isoleucine 430.

The protein belongs to the TFIIB family.

The polypeptide is Putative transcription initiation factor IIB-like protein (Acanthamoeba polyphaga mimivirus (APMV)).